Consider the following 162-residue polypeptide: 18.5 kDa class IV heat shock protein (162 aa).

The region spanning 53-149 (TSSSTVNTQL…PPQLPEIEEN (97 aa)) is the sHSP domain.

This sequence belongs to the small heat shock protein (HSP20) family. As to quaternary structure, may form oligomeric structures.

It localises to the cytoplasm. The chain is 18.5 kDa class IV heat shock protein (HSP18.5) from Arabidopsis thaliana (Mouse-ear cress).